We begin with the raw amino-acid sequence, 75 residues long: Pi-hexatoxin-Hi1b (75 aa).

Intrachain disulfides connect Cys3/Cys18, Cys10/Cys23, Cys17/Cys33, Cys40/Cys55, Cys47/Cys60, and Cys54/Cys71. 2 Domain repeats span residues 3 to 33 and 40 to 71; these read CIRK…FEVC and CLVK…SSVC. Residues 3–71 are 2 X approximate repeats with cysteine pattern C-C-CC-C-C; it reads CIRKWLSCVD…KRSGNKSSVC (69 aa).

The protein belongs to the psalmotoxin-1 family. Double-knot toxin subfamily. Expressed by the venom gland.

The protein resides in the secreted. Functionally, this toxin potently and selectively inhibits ASIC1a, an isoform of the gene ASIC1. It incompletely inhibits ASIC1a activation in a pH-independent and slowly reversible manner. This toxin acts by binding to and stabilizing the closed state of the channel, thereby impeding the transition into a conducting state. This toxin may bind to the acidic pocket of ASIC1a, since mutation of a key residue of this pocket (Arg-350) abolishes the ability of the toxin to inhibit ASIC1a. In vivo, this toxin protects the brain from neuronal injury when administered up to 8 hours after stroke onset. In Hadronyche infensa (Fraser island funnel-web spider), this protein is Pi-hexatoxin-Hi1b.